We begin with the raw amino-acid sequence, 82 residues long: Large ribosomal subunit protein bL27c (82 aa).

The segment at 1–22 (MAHKKGAGSTKNGRDSNSKRLG) is disordered.

The protein belongs to the bacterial ribosomal protein bL27 family.

It localises to the plastid. The protein resides in the chloroplast. This chain is Large ribosomal subunit protein bL27c (rpl27), found in Chrysotila carterae (Marine alga).